A 210-amino-acid polypeptide reads, in one-letter code: Uridine kinase P10 (210 aa).

10–18 (GISGSGKST) is a binding site for ATP. Residue Asp41 is part of the active site.

Belongs to the uridine kinase family. Interacts with host eIF-2B; this interaction disrupts the interaction between eIF2 and eIF-2B, which leads to the inhibition of stress granules formation.

It is found in the host cytoplasm. It localises to the host perinuclear region. The catalysed reaction is uridine + ATP = UMP + ADP + H(+). Inhibits the integrated stress response (ISR) in the infected cell by preventing the sequestration of eIF2B by phosphorylated EIF2S1/eIF-2alpha. Stress granule formation in response to EIF2S1/eIF-2alpha phosphorylation is thus inhibited, which allows protein synthesis and viral replication. Phosphorylates uridine to uridine monophosphate. The polypeptide is Uridine kinase P10 (ORF10) (Beluga whale coronavirus (strain SW1) (BwCoV)).